The following is a 184-amino-acid chain: ATP synthase subunit b, chloroplastic (184 aa).

A helical transmembrane segment spans residues 27 to 49; it reads LATNPINLSVVFGVLIFFGKGVL.

Belongs to the ATPase B chain family. In terms of assembly, F-type ATPases have 2 components, F(1) - the catalytic core - and F(0) - the membrane proton channel. F(1) has five subunits: alpha(3), beta(3), gamma(1), delta(1), epsilon(1). F(0) has four main subunits: a(1), b(1), b'(1) and c(10-14). The alpha and beta chains form an alternating ring which encloses part of the gamma chain. F(1) is attached to F(0) by a central stalk formed by the gamma and epsilon chains, while a peripheral stalk is formed by the delta, b and b' chains.

It localises to the plastid. The protein resides in the chloroplast thylakoid membrane. F(1)F(0) ATP synthase produces ATP from ADP in the presence of a proton or sodium gradient. F-type ATPases consist of two structural domains, F(1) containing the extramembraneous catalytic core and F(0) containing the membrane proton channel, linked together by a central stalk and a peripheral stalk. During catalysis, ATP synthesis in the catalytic domain of F(1) is coupled via a rotary mechanism of the central stalk subunits to proton translocation. In terms of biological role, component of the F(0) channel, it forms part of the peripheral stalk, linking F(1) to F(0). The protein is ATP synthase subunit b, chloroplastic of Lobularia maritima (Sweet alyssum).